A 104-amino-acid polypeptide reads, in one-letter code: Flagellar hook-basal body complex protein FliE (104 aa).

Belongs to the FliE family.

It localises to the bacterial flagellum basal body. In Pectobacterium atrosepticum (strain SCRI 1043 / ATCC BAA-672) (Erwinia carotovora subsp. atroseptica), this protein is Flagellar hook-basal body complex protein FliE.